The primary structure comprises 126 residues: Small ribosomal subunit protein uS11 (126 aa).

Belongs to the universal ribosomal protein uS11 family. Part of the 30S ribosomal subunit.

In terms of biological role, located on the platform of the 30S subunit. This is Small ribosomal subunit protein uS11 from Methanosarcina acetivorans (strain ATCC 35395 / DSM 2834 / JCM 12185 / C2A).